Here is a 173-residue protein sequence, read N- to C-terminus: Co-chaperone protein HscB homolog (173 aa).

The J domain occupies C5–I77.

It belongs to the HscB family. Interacts with HscA and stimulates its ATPase activity.

Co-chaperone involved in the maturation of iron-sulfur cluster-containing proteins. Seems to help targeting proteins to be folded toward HscA. The polypeptide is Co-chaperone protein HscB homolog (Pseudomonas putida (strain W619)).